The chain runs to 205 residues: Small ribosomal subunit protein uS4 (205 aa).

The S4 RNA-binding domain occupies 93-171; the sequence is SRVSSVLYRS…SPHYLEVDRE (79 aa).

Belongs to the universal ribosomal protein uS4 family. Part of the 30S ribosomal subunit. Contacts protein S5. The interaction surface between S4 and S5 is involved in control of translational fidelity.

One of the primary rRNA binding proteins, it binds directly to 16S rRNA where it nucleates assembly of the body of the 30S subunit. Its function is as follows. With S5 and S12 plays an important role in translational accuracy. This Neorickettsia sennetsu (strain ATCC VR-367 / Miyayama) (Ehrlichia sennetsu) protein is Small ribosomal subunit protein uS4.